The following is a 124-amino-acid chain: Large ribosomal subunit protein uL18 (124 aa).

The protein belongs to the universal ribosomal protein uL18 family. Part of the 50S ribosomal subunit; part of the 5S rRNA/L5/L18/L25 subcomplex. Contacts the 5S and 23S rRNAs.

In terms of biological role, this is one of the proteins that bind and probably mediate the attachment of the 5S RNA into the large ribosomal subunit, where it forms part of the central protuberance. This Desulfosudis oleivorans (strain DSM 6200 / JCM 39069 / Hxd3) (Desulfococcus oleovorans) protein is Large ribosomal subunit protein uL18.